A 159-amino-acid polypeptide reads, in one-letter code: MKRIVRISFTDMEATDSSSSEDESPPSSRRRGKKLVKEIVIDHSDPPEVGKTRFKIRIPASLLAARNTTANKKKFRGVRQRPWGKWAAEIRCGRVKGRPERIWLGTFETAEEAALAYDNAAIQLIGPDAPTNFGRPDVDSAVVKKQDSDASGGASEEVV.

Disordered regions lie at residues M1–V36 and D128–V159. The segment at residues K74–G134 is a DNA-binding region (AP2/ERF). The segment covering P136–S148 has biased composition (basic and acidic residues).

Belongs to the AP2/ERF transcription factor family. ERF subfamily.

The protein resides in the nucleus. Probably acts as a transcriptional activator. Binds to the GCC-box pathogenesis-related promoter element. May be involved in the regulation of gene expression by stress factors and by components of stress signal transduction pathways. This Arabidopsis thaliana (Mouse-ear cress) protein is Ethylene-responsive transcription factor ERF069 (ERF069).